The chain runs to 159 residues: Globin D, coelomic (159 aa).

Position 2 is an N-acetylglycine (Gly-2). Residues 12–158 (DLTPAEKDLI…VQGVLITKHA (147 aa)) enclose the Globin domain. Heme b is bound by residues His-74 and His-105.

This sequence belongs to the globin family. Homodimer.

The chain is Globin D, coelomic from Molpadia arenicola (Sea cucumber).